A 289-amino-acid chain; its full sequence is Glucanase inhibitor protein 2 (289 aa).

Positions 1–19 (MKVTATIAAASMAIAAASA) are cleaved as a signal peptide. Residues 29–257 (ILGGSIIPSG…ALKWVNPIIK (229 aa)) form the Peptidase S1 domain. The cysteines at positions 56 and 72 are disulfide-linked. N-linked (GlcNAc...) asparagine glycosylation is found at N89, N104, and N109. 2 cysteine pairs are disulfide-bonded: C180-C192 and C202-C233.

Belongs to the peptidase S1 family.

It is found in the secreted. Its function is as follows. Secreted effector that suppresses host plant glucan elicitor-mediated defense responses. Targets host endoglucanases and inhibits the endoglucanase-mediated release of elicitor-active glucan oligosaccharides from P.sojae cell walls. This chain is Glucanase inhibitor protein 2, found in Phytophthora sojae (Soybean stem and root rot agent).